Consider the following 356-residue polypeptide: Butyrate kinase 2 (356 aa).

It belongs to the acetokinase family. Homodimer.

The protein localises to the cytoplasm. The catalysed reaction is butanoate + ATP = butanoyl phosphate + ADP. Its pathway is lipid metabolism; butanoate metabolism. Catalyzes the conversion of butyryl-CoA through butyryl phosphate to butyrate. In Clostridium acetobutylicum (strain ATCC 824 / DSM 792 / JCM 1419 / IAM 19013 / LMG 5710 / NBRC 13948 / NRRL B-527 / VKM B-1787 / 2291 / W), this protein is Butyrate kinase 2 (buk2).